We begin with the raw amino-acid sequence, 396 residues long: S-adenosylmethionine synthase (396 aa).

H16 provides a ligand contact to ATP. D18 provides a ligand contact to Mg(2+). E44 is a binding site for K(+). Positions 57 and 100 each coordinate L-methionine. Residues 100–110 form a flexible loop region; it reads QSPDINQGVDR. ATP contacts are provided by residues 165 to 167, D240, 246 to 247, A263, and K267; these read DAK and RK. D240 contributes to the L-methionine binding site. Position 271 (K271) interacts with L-methionine.

This sequence belongs to the AdoMet synthase family. Homotetramer; dimer of dimers. Mg(2+) serves as cofactor. It depends on K(+) as a cofactor.

The protein resides in the cytoplasm. The catalysed reaction is L-methionine + ATP + H2O = S-adenosyl-L-methionine + phosphate + diphosphate. It functions in the pathway amino-acid biosynthesis; S-adenosyl-L-methionine biosynthesis; S-adenosyl-L-methionine from L-methionine: step 1/1. Functionally, catalyzes the formation of S-adenosylmethionine (AdoMet) from methionine and ATP. The overall synthetic reaction is composed of two sequential steps, AdoMet formation and the subsequent tripolyphosphate hydrolysis which occurs prior to release of AdoMet from the enzyme. This Pseudomonas fluorescens (strain SBW25) protein is S-adenosylmethionine synthase.